We begin with the raw amino-acid sequence, 85 residues long: HssA/B-like protein 62 (85 aa).

The protein belongs to the hssA/B family.

This is HssA/B-like protein 62 (hssl62) from Dictyostelium discoideum (Social amoeba).